We begin with the raw amino-acid sequence, 101 residues long: Small ribosomal subunit protein uS14 (101 aa).

The protein belongs to the universal ribosomal protein uS14 family. Part of the 30S ribosomal subunit. Contacts proteins S3 and S10.

Binds 16S rRNA, required for the assembly of 30S particles and may also be responsible for determining the conformation of the 16S rRNA at the A site. This chain is Small ribosomal subunit protein uS14, found in Leifsonia xyli subsp. xyli (strain CTCB07).